A 498-amino-acid polypeptide reads, in one-letter code: ATP synthase subunit beta, chloroplastic (498 aa).

Phosphothreonine is present on T6. A Phosphoserine modification is found at S13. 172-179 provides a ligand contact to ATP; the sequence is GGAGVGKT.

This sequence belongs to the ATPase alpha/beta chains family. F-type ATPases have 2 components, CF(1) - the catalytic core - and CF(0) - the membrane proton channel. CF(1) has five subunits: alpha(3), beta(3), gamma(1), delta(1), epsilon(1). CF(0) has four main subunits: a(1), b(1), b'(1) and c(9-12).

The protein resides in the plastid. The protein localises to the chloroplast thylakoid membrane. It catalyses the reaction ATP + H2O + 4 H(+)(in) = ADP + phosphate + 5 H(+)(out). Produces ATP from ADP in the presence of a proton gradient across the membrane. The catalytic sites are hosted primarily by the beta subunits. The sequence is that of ATP synthase subunit beta, chloroplastic from Draba nemorosa (Woodland whitlowgrass).